The sequence spans 1486 residues: Chromosome partition protein MukB (1486 aa).

Residue 34-41 (GGNGAGKS) coordinates ATP. 3 coiled-coil regions span residues 326–418 (LEAD…QYNQ), 444–480 (LETF…QAYQ), and 509–603 (RHLA…RAPV). The flexible hinge stretch occupies residues 666–783 (PGGSEDQRLN…EVPLFGRAAR (118 aa)). 3 coiled-coil regions span residues 835 to 923 (EAEI…AKLE), 977 to 1115 (EMLS…TAKA), and 1209 to 1266 (VEAI…QNVS).

Belongs to the SMC family. MukB subfamily. As to quaternary structure, homodimerization via its hinge domain. Binds to DNA via its C-terminal region. Interacts, and probably forms a ternary complex, with MukE and MukF via its C-terminal region. The complex formation is stimulated by calcium or magnesium. Interacts with tubulin-related protein FtsZ.

The protein localises to the cytoplasm. Its subcellular location is the nucleoid. Functionally, plays a central role in chromosome condensation, segregation and cell cycle progression. Functions as a homodimer, which is essential for chromosome partition. Involved in negative DNA supercoiling in vivo, and by this means organize and compact chromosomes. May achieve or facilitate chromosome segregation by condensation DNA from both sides of a centrally located replisome during cell division. This is Chromosome partition protein MukB from Escherichia coli O6:K15:H31 (strain 536 / UPEC).